The chain runs to 232 residues: Sugar fermentation stimulation protein homolog (232 aa).

The protein belongs to the SfsA family.

This chain is Sugar fermentation stimulation protein homolog, found in Acidithiobacillus ferrooxidans (strain ATCC 23270 / DSM 14882 / CIP 104768 / NCIMB 8455) (Ferrobacillus ferrooxidans (strain ATCC 23270)).